A 44-amino-acid polypeptide reads, in one-letter code: MTTRKSAEAITYPIFTVRWLSIHALAVPTIFFLGSITAMQFIQR.

The helical transmembrane segment at 19 to 35 threads the bilayer; that stretch reads WLSIHALAVPTIFFLGS. Histidine 23 is a heme binding site.

It belongs to the PsbE/PsbF family. In terms of assembly, heterodimer of an alpha subunit and a beta subunit. PSII is composed of 1 copy each of membrane proteins PsbA, PsbB, PsbC, PsbD, PsbE, PsbF, PsbH, PsbI, PsbJ, PsbK, PsbL, PsbM, PsbT, PsbX, PsbY, PsbZ, Psb30/Ycf12, at least 3 peripheral proteins of the oxygen-evolving complex and a large number of cofactors. It forms dimeric complexes. Heme b serves as cofactor.

It localises to the plastid. The protein localises to the chloroplast thylakoid membrane. In terms of biological role, this b-type cytochrome is tightly associated with the reaction center of photosystem II (PSII). PSII is a light-driven water:plastoquinone oxidoreductase that uses light energy to abstract electrons from H(2)O, generating O(2) and a proton gradient subsequently used for ATP formation. It consists of a core antenna complex that captures photons, and an electron transfer chain that converts photonic excitation into a charge separation. This chain is Cytochrome b559 subunit beta, found in Tetradesmus obliquus (Green alga).